Reading from the N-terminus, the 107-residue chain is Nucleoid-associated protein GDI3467/Gdia_2910 (107 aa).

Belongs to the YbaB/EbfC family. Homodimer.

The protein localises to the cytoplasm. Its subcellular location is the nucleoid. Its function is as follows. Binds to DNA and alters its conformation. May be involved in regulation of gene expression, nucleoid organization and DNA protection. This chain is Nucleoid-associated protein GDI3467/Gdia_2910, found in Gluconacetobacter diazotrophicus (strain ATCC 49037 / DSM 5601 / CCUG 37298 / CIP 103539 / LMG 7603 / PAl5).